A 143-amino-acid polypeptide reads, in one-letter code: Hemoglobin subunit alpha (143 aa).

N-acetylserine is present on Ser-2. A Globin domain is found at 2-143; that stretch reads SLSDKDKAAV…LALALSEKYR (142 aa). Residue His-60 participates in O2 binding. Residue His-89 participates in heme b binding.

The protein belongs to the globin family. Heterotetramer of two alpha chains and two beta chains. Red blood cells.

Functionally, involved in oxygen transport from gills to the various peripheral tissues. The protein is Hemoglobin subunit alpha (hba) of Cyprinus carpio (Common carp).